The chain runs to 502 residues: MKNKENEVLNLTLNLTIIFLIFCNISIXIFKIDFTKHKAFTISKVTKNLFSSANETIYITYYNSGSLENYFAFPNQIKNFLISFSDASKCKVIYKEIDADKISTPLEHIGIPSQQIDLRDINQLSILKIYSGIEIIYEGKREVIPVVTEISNLEYDLANGLDKLINNTKKVLGLAFGDSTLKEAHKNFSEIMKKAFGIEIKEIDLKTEKLEDIRKDINGLFIIGAKEIDEEIAKKIDDFIVNDGKIFVATSTIDYNPQNPYGITPIKSSLFDLFESYGIKYNDNIILDKRAPTIFLGGNFQTYYPWILIDKSNIVKKDMPLLKNFYTATIPWSSSLELIKKDETEVKFLPLFASSKQSWQVKEPNLSNISLNAFEVPNKFEENKTKILGYAIEGKIKSPYKDQYSKNSKIILTGSSMIFSDYMYNGSPSNFELSGRISDYLMQKEEFFNIKSREVRAKLKFASSSNEMVNAKFSLIIVNLIILPTIILIFGLVRFTRKRKAN.

2 consecutive transmembrane segments (helical) span residues 10-30 (NLTL…IXIF) and 473-493 (FSLI…FGLV).

It is found in the cell membrane. This is an uncharacterized protein from Borreliella burgdorferi (strain ATCC 35210 / DSM 4680 / CIP 102532 / B31) (Borrelia burgdorferi).